A 158-amino-acid polypeptide reads, in one-letter code: Endoribonuclease YbeY (158 aa).

3 residues coordinate Zn(2+): H119, H123, and H129.

The protein belongs to the endoribonuclease YbeY family. It depends on Zn(2+) as a cofactor.

It localises to the cytoplasm. Its function is as follows. Single strand-specific metallo-endoribonuclease involved in late-stage 70S ribosome quality control and in maturation of the 3' terminus of the 16S rRNA. This Acinetobacter baumannii (strain ACICU) protein is Endoribonuclease YbeY.